The following is a 344-amino-acid chain: Protein pelota homolog (344 aa).

It belongs to the eukaryotic release factor 1 family. Pelota subfamily. As to quaternary structure, monomer. A divalent metal cation is required as a cofactor.

The protein resides in the cytoplasm. In terms of biological role, may function in recognizing stalled ribosomes, interact with stem-loop structures in stalled mRNA molecules, and effect endonucleolytic cleavage of the mRNA. May play a role in the release non-functional ribosomes and degradation of damaged mRNAs. Has endoribonuclease activity. This chain is Protein pelota homolog, found in Saccharolobus islandicus (strain M.14.25 / Kamchatka #1) (Sulfolobus islandicus).